Here is a 169-residue protein sequence, read N- to C-terminus: uncharacterized protein (169 aa).

The 131-residue stretch at 32–162 folds into the Nudix hydrolase domain; that stretch reads CNFRVVNSFV…EPAKSDLIKL (131 aa). A Nudix box motif is present at residues 69 to 91; the sequence is GGHVESGETYEDALQRELEEELN. Mg(2+)-binding residues include Glu-85 and Glu-89.

The protein belongs to the Nudix hydrolase family. Requires Mg(2+) as cofactor.

This is an uncharacterized protein from Nostoc sp. (strain PCC 7120 / SAG 25.82 / UTEX 2576).